The sequence spans 132 residues: Transcription antitermination protein NusB (132 aa).

Belongs to the NusB family.

Involved in transcription antitermination. Required for transcription of ribosomal RNA (rRNA) genes. Binds specifically to the boxA antiterminator sequence of the ribosomal RNA (rrn) operons. The sequence is that of Transcription antitermination protein NusB from Sulfurimonas denitrificans (strain ATCC 33889 / DSM 1251) (Thiomicrospira denitrificans (strain ATCC 33889 / DSM 1251)).